The following is a 182-amino-acid chain: Inosine/xanthosine triphosphatase (182 aa).

The Mg(2+) site is built by Asp-38 and Glu-68. 68–69 (EA) lines the substrate pocket.

It belongs to the YjjX NTPase family. As to quaternary structure, homodimer. It depends on Mg(2+) as a cofactor. Requires Mn(2+) as cofactor.

It catalyses the reaction XTP + H2O = XDP + phosphate + H(+). The catalysed reaction is ITP + H2O = IDP + phosphate + H(+). Its function is as follows. Phosphatase that hydrolyzes non-canonical purine nucleotides such as XTP and ITP to their respective diphosphate derivatives. Probably excludes non-canonical purines from DNA/RNA precursor pool, thus preventing their incorporation into DNA/RNA and avoiding chromosomal lesions. The chain is Inosine/xanthosine triphosphatase from Erwinia tasmaniensis (strain DSM 17950 / CFBP 7177 / CIP 109463 / NCPPB 4357 / Et1/99).